The following is a 339-amino-acid chain: MEELLKELSKRAEEEILKAKSLQEIESLRVKYLGKKGELTQILRGMGSLSPEERPVIGQLANDVREKIENMILERREKIAKEEKERKIKEEYIDITMPGKPYKYGHKHPITLVMDEIKRIFLGLGFSIAEGPEVELAYYNFEALNTPEDHPARDLQDTFYITSDILLRTQTSPVQVRTMEKTKPPIRVISPGRVYRSDDIDATHSPVFHQMEGLVVDEGITMGDLKGVLNVFAKKFFGEQTKTKFRPHFFPFTEPSAEMDVSCFACGGKGCRVCGYTGWIEILGAGMVHPNVLRMSGIDPEKYTGFAFGLGIDRIAMLKYGIEDLRLLFENDMRFIEQF.

Glu-254 lines the Mg(2+) pocket.

This sequence belongs to the class-II aminoacyl-tRNA synthetase family. Phe-tRNA synthetase alpha subunit type 1 subfamily. As to quaternary structure, tetramer of two alpha and two beta subunits. The cofactor is Mg(2+).

The protein resides in the cytoplasm. The enzyme catalyses tRNA(Phe) + L-phenylalanine + ATP = L-phenylalanyl-tRNA(Phe) + AMP + diphosphate + H(+). This Caldanaerobacter subterraneus subsp. tengcongensis (strain DSM 15242 / JCM 11007 / NBRC 100824 / MB4) (Thermoanaerobacter tengcongensis) protein is Phenylalanine--tRNA ligase alpha subunit.